The sequence spans 380 residues: Chaperone protein DnaJ (380 aa).

The J domain maps to 5-69 (DLYKVLGVEK…QKRAQYDQFG (65 aa)). The CR-type zinc finger occupies 140–222 (GKKTTITYNR…CGGSGHTEQS (83 aa)). Zn(2+)-binding residues include cysteine 153, cysteine 156, cysteine 170, cysteine 173, cysteine 196, cysteine 199, cysteine 210, and cysteine 213. CXXCXGXG motif repeat units lie at residues 153 to 160 (CETCGGSG), 170 to 177 (CSKCHGAG), 196 to 203 (CDVCHGTG), and 210 to 217 (CATCGGSG).

Belongs to the DnaJ family. In terms of assembly, homodimer. Zn(2+) serves as cofactor.

The protein localises to the cytoplasm. Participates actively in the response to hyperosmotic and heat shock by preventing the aggregation of stress-denatured proteins and by disaggregating proteins, also in an autonomous, DnaK-independent fashion. Unfolded proteins bind initially to DnaJ; upon interaction with the DnaJ-bound protein, DnaK hydrolyzes its bound ATP, resulting in the formation of a stable complex. GrpE releases ADP from DnaK; ATP binding to DnaK triggers the release of the substrate protein, thus completing the reaction cycle. Several rounds of ATP-dependent interactions between DnaJ, DnaK and GrpE are required for fully efficient folding. Also involved, together with DnaK and GrpE, in the DNA replication of plasmids through activation of initiation proteins. The polypeptide is Chaperone protein DnaJ (Lactiplantibacillus plantarum (strain ATCC BAA-793 / NCIMB 8826 / WCFS1) (Lactobacillus plantarum)).